We begin with the raw amino-acid sequence, 1180 residues long: Chitin synthase 6 (1180 aa).

Transmembrane regions (helical) follow at residues 108-128 (FTIC…IIAF) and 374-394 (LLLA…IAAL). A glycan (N-linked (GlcNAc...) asparagine) is linked at Asn737. The next 3 helical transmembrane spans lie at 762–782 (FIVF…VYLV), 795–815 (IPYI…ILFL), and 822–842 (YIGW…FLPI). A DEK-C domain is found at 1118–1175 (DPTDEEIKSAVQTYLANQPSLMNVTKRSVREALVAAFPNAELSYKKSMINKAIDDTLS).

This sequence belongs to the chitin synthase family. Class V subfamily.

It localises to the cell membrane. The protein resides in the cytoplasmic vesicle membrane. It catalyses the reaction [(1-&gt;4)-N-acetyl-beta-D-glucosaminyl](n) + UDP-N-acetyl-alpha-D-glucosamine = [(1-&gt;4)-N-acetyl-beta-D-glucosaminyl](n+1) + UDP + H(+). Its function is as follows. Polymerizes chitin, a structural polymer of the cell wall and septum, by transferring the sugar moiety of UDP-GlcNAc to the non-reducing end of the growing chitin polymer. Plays a crucial role during infection and allows the fungus to overcome the resistance of the plant that checks growth of the pathogen and eventually eliminates it. The chain is Chitin synthase 6 from Mycosarcoma maydis (Corn smut fungus).